Consider the following 919-residue polypeptide: DNA-directed RNA polymerase 132 kDa polypeptide (919 aa).

The protein belongs to the RNA polymerase beta chain family. In terms of assembly, the DNA-dependent RNA polymerase used for intermediate and late genes expression consists of eight subunits (147) kDa, (133) kDa, (35) kDa, (30) kDa, (22) kDa, (19) kDa, (18) kDa and (7) kDa totalling more than 500 kDa in mass. The same holoenzyme, with the addition of the transcription-specificity factor RAP94, is used for early gene expression.

It is found in the virion. The enzyme catalyses RNA(n) + a ribonucleoside 5'-triphosphate = RNA(n+1) + diphosphate. Functionally, part of the DNA-dependent RNA polymerase which catalyzes the transcription of viral DNA into RNA using the four ribonucleoside triphosphates as substrates. Responsible for the transcription of early, intermediate and late genes. DNA-dependent RNA polymerase associates with the early transcription factor (ETF), itself composed of D6 and A7, thereby allowing the early genes transcription. Late transcription, and probably also intermediate transcription, require newly synthesized RNA polymerase. This is DNA-directed RNA polymerase 132 kDa polypeptide (RPO132) from Sheeppox virus (strain KS-1) (SPPV).